The primary structure comprises 238 residues: MSEDLAKQLASYKAQLQQVEAALSGNGENEDLLKLKKDLQEVIELTKDLLSTQPSETLTSSDSFASTQPTHSWKVGDKCMAVWSEDGQCYEAEIEEIDEENGTAAITFAVYGNAEVTPLLNLKPVEEGRKAKEDSGNKPMSKKEMIAQQREYKKKKALKKAQRIKELEQEREDQKVKWQQFNNRAYSKNKKGQVKRSIFASPESVTGKVGVGTCGIADKPMTQYQDTSKYNVRHLMPQ.

Residues Ser-72 to Lys-132 enclose the Tudor domain. The Nuclear localization signal motif lies at Lys-142–Lys-160. Ser-201 carries the post-translational modification Phosphoserine. Lys-219 is subject to N6-acetyllysine.

It belongs to the SMN family. Associates with spliceosomes. Associates with U4/U5/U6 tri-snRNP and with U2 snRNP.

The protein resides in the nucleus speckle. Its subcellular location is the nucleus. It localises to the cajal body. Its function is as follows. Involved in spliceosome assembly. The protein is Survival of motor neuron-related-splicing factor 30 (Smndc1) of Rattus norvegicus (Rat).